The following is a 312-amino-acid chain: Pre-mRNA-splicing factor 38A (312 aa).

The N-terminal protein interaction domain stretch occupies residues 1 to 179 (MANRTVKDAH…VLEEAEQLEP (179 aa)). 5 positions are modified to phosphoserine: serine 11, serine 193, serine 194, serine 209, and serine 226. The stretch at 170-204 (VLEEAEQLEPRVSALEEDMDDVESSEEEEEEDEKL) forms a coiled coil. Residues 181-312 (VSALEEDMDD…SHKKSRRGNE (132 aa)) are disordered. The span at 184–202 (LEEDMDDVESSEEEEEEDE) shows a compositional bias: acidic residues. Positions 203–224 (KLERVPSPDHRRRSYRDLDKPR) are enriched in basic and acidic residues. 2 stretches are compositionally biased toward basic residues: residues 225–294 (RSPA…RSHS) and 301–312 (KKSHKKSRRGNE).

It belongs to the PRP38 family. In terms of assembly, component of the spliceosome B complex. Interacts (via N-terminal interaction domain) with ZMAT2 and MFAP1.

It localises to the nucleus. Its function is as follows. Involved in pre-mRNA splicing as a component of the spliceosome. In Mus musculus (Mouse), this protein is Pre-mRNA-splicing factor 38A (Prpf38a).